Reading from the N-terminus, the 508-residue chain is Steroid 17-alpha-hydroxylase/17,20 lyase (508 aa).

A heme-binding site is contributed by cysteine 442.

The protein belongs to the cytochrome P450 family. Heme serves as cofactor.

It is found in the endoplasmic reticulum membrane. It localises to the microsome membrane. The catalysed reaction is a C21-steroid + reduced [NADPH--hemoprotein reductase] + O2 = a 17alpha-hydroxy-C21-steroid + oxidized [NADPH--hemoprotein reductase] + H2O + H(+). It catalyses the reaction progesterone + reduced [NADPH--hemoprotein reductase] + O2 = 17alpha-hydroxyprogesterone + oxidized [NADPH--hemoprotein reductase] + H2O + H(+). The enzyme catalyses pregnenolone + reduced [NADPH--hemoprotein reductase] + O2 = 17alpha-hydroxypregnenolone + oxidized [NADPH--hemoprotein reductase] + H2O + H(+). It carries out the reaction 17alpha-hydroxyprogesterone + reduced [NADPH--hemoprotein reductase] + O2 = androst-4-ene-3,17-dione + acetate + oxidized [NADPH--hemoprotein reductase] + H2O + 2 H(+). The catalysed reaction is 17alpha-hydroxyprogesterone + reduced [NADPH--hemoprotein reductase] + O2 = 16alpha,17alpha-dihydroxyprogesterone + oxidized [NADPH--hemoprotein reductase] + H2O + H(+). It catalyses the reaction 16alpha,17alpha-dihydroxyprogesterone + reduced [NADPH--hemoprotein reductase] + O2 = 6beta,16alpha,17alpha-trihydroxyprogesterone + oxidized [NADPH--hemoprotein reductase] + H2O + H(+). The enzyme catalyses 17alpha-hydroxypregnenolone + reduced [NADPH--hemoprotein reductase] + O2 = 3beta-hydroxyandrost-5-en-17-one + acetate + oxidized [NADPH--hemoprotein reductase] + H2O + 2 H(+). It carries out the reaction 16alpha,17alpha-dihydroxypregnenolone + reduced [NADPH--hemoprotein reductase] + O2 = 3beta,16alpha-dihydroxy-androst-5-en-17-one + acetate + oxidized [NADPH--hemoprotein reductase] + H2O + 2 H(+). The catalysed reaction is 3beta-hydroxyandrost-5-en-17-one + reduced [NADPH--hemoprotein reductase] + O2 = 3beta,16alpha-dihydroxy-androst-5-en-17-one + oxidized [NADPH--hemoprotein reductase] + H2O + H(+). It catalyses the reaction androst-4-ene-3,17-dione + reduced [NADPH--hemoprotein reductase] + O2 = 16alpha-hydroxyandrost-4-ene-3,17-dione + oxidized [NADPH--hemoprotein reductase] + H2O + H(+). Its pathway is steroid hormone biosynthesis. It participates in steroid biosynthesis; glucocorticoid biosynthesis. Its activity is regulated as follows. Regulated predominantly by intracellular cAMP levels. The 17,20-lyase activity is stimulated by cytochrome b5, which acts as an allosteric effector increasing the Vmax of the lyase activity. Functionally, a cytochrome P450 monooxygenase involved in corticoid and androgen biosynthesis. Catalyzes 17-alpha hydroxylation of C21 steroids, which is common for both pathways. A second oxidative step, required only for androgen synthesis, involves an acyl-carbon cleavage. The 17-alpha hydroxy intermediates, as part of adrenal glucocorticoids biosynthesis pathway, are precursors of cortisol. Hydroxylates steroid hormones, pregnenolone and progesterone to form 17-alpha hydroxy metabolites, followed by the cleavage of the C17-C20 bond to form C19 steroids, dehydroepiandrosterone (DHEA) and androstenedione. Has 16-alpha hydroxylase activity. Catalyzes 16-alpha hydroxylation of 17-alpha hydroxy pregnenolone, followed by the cleavage of the C17-C20 bond to form 16-alpha-hydroxy DHEA. Also 16-alpha hydroxylates androgens, relevant for estriol synthesis. Mechanistically, uses molecular oxygen inserting one oxygen atom into a substrate, and reducing the second into a water molecule, with two electrons provided by NADPH via cytochrome P450 reductase (CPR; NADPH-ferrihemoprotein reductase). The protein is Steroid 17-alpha-hydroxylase/17,20 lyase (CYP17A1) of Cavia porcellus (Guinea pig).